Reading from the N-terminus, the 548-residue chain is Rhodopsin kinase GRK7 (548 aa).

Serine 34 is subject to Phosphoserine; by PKA. Residues 54–171 (FHSLCEQQPI…LASPFYDRFL (118 aa)) enclose the RGS domain. The Protein kinase domain maps to 186-449 (FTEFRVLGKG…ADDPRKHPFF (264 aa)). ATP-binding positions include 192–200 (LGKGGFGEV) and lysine 215. Aspartate 311 serves as the catalytic Proton acceptor. Positions 450–515 (QTVNFPRLEA…GAVPVAWQEE (66 aa)) constitute an AGC-kinase C-terminal domain. Residues 523 to 548 (EELNDPNRPSGDGKGDSSKSGVCLLL) form a disordered region. Position 545 is a cysteine methyl ester (cysteine 545). Cysteine 545 carries S-geranylgeranyl cysteine lipidation. Residues 546-548 (LLL) constitute a propeptide, removed in mature form.

This sequence belongs to the protein kinase superfamily. AGC Ser/Thr protein kinase family. GPRK subfamily. In terms of assembly, interacts (when prenylated) with PDE6D; this promotes release from membranes. In terms of processing, autophosphorylated. Phosphorylation at Ser-34 is regulated by light and activated by cAMP. In terms of tissue distribution, retina. Cones and rod.

It is found in the membrane. It carries out the reaction L-threonyl-[rhodopsin] + ATP = O-phospho-L-threonyl-[rhodopsin] + ADP + H(+). The enzyme catalyses L-seryl-[rhodopsin] + ATP = O-phospho-L-seryl-[rhodopsin] + ADP + H(+). Its activity is regulated as follows. Inhibited by phosphorylation of Ser-34. Functionally, retina-specific kinase involved in the shutoff of the photoresponse and adaptation to changing light conditions via cone opsin phosphorylation, including rhodopsin (RHO). This chain is Rhodopsin kinase GRK7 (GRK7), found in Ictidomys tridecemlineatus (Thirteen-lined ground squirrel).